The chain runs to 308 residues: Elongation factor Ts (308 aa).

Residues 80 to 83 (TDFV) form an involved in Mg(2+) ion dislocation from EF-Tu region.

This sequence belongs to the EF-Ts family.

The protein resides in the cytoplasm. Associates with the EF-Tu.GDP complex and induces the exchange of GDP to GTP. It remains bound to the aminoacyl-tRNA.EF-Tu.GTP complex up to the GTP hydrolysis stage on the ribosome. The chain is Elongation factor Ts from Rhodopseudomonas palustris (strain ATCC BAA-98 / CGA009).